Consider the following 293-residue polypeptide: Elongation factor Ts (293 aa).

The segment at 80–83 (TDFV) is involved in Mg(2+) ion dislocation from EF-Tu.

Belongs to the EF-Ts family.

It is found in the cytoplasm. Associates with the EF-Tu.GDP complex and induces the exchange of GDP to GTP. It remains bound to the aminoacyl-tRNA.EF-Tu.GTP complex up to the GTP hydrolysis stage on the ribosome. The chain is Elongation factor Ts from Burkholderia thailandensis (strain ATCC 700388 / DSM 13276 / CCUG 48851 / CIP 106301 / E264).